The primary structure comprises 808 residues: Glycerol-3-phosphate acyltransferase (808 aa).

Residues 306–311 (HRSHMD) carry the HXXXXD motif motif.

Belongs to the GPAT/DAPAT family.

The protein localises to the cell inner membrane. The catalysed reaction is sn-glycerol 3-phosphate + an acyl-CoA = a 1-acyl-sn-glycero-3-phosphate + CoA. The protein operates within phospholipid metabolism; CDP-diacylglycerol biosynthesis; CDP-diacylglycerol from sn-glycerol 3-phosphate: step 1/3. This chain is Glycerol-3-phosphate acyltransferase, found in Vibrio parahaemolyticus serotype O3:K6 (strain RIMD 2210633).